The following is a 198-amino-acid chain: Auxin-binding protein 1 (198 aa).

The first 33 residues, 1-33 (MIVLSVGSASSSPIVVVFSVALLLFYFSETSLG), serve as a signal peptide directing secretion. C36 and C189 are oxidised to a cystine. Zn(2+) is bound by residues H92, H94, and E98. N-linked (GlcNAc...) asparagine glycosylation occurs at N130. A Zn(2+)-binding site is contributed by H141. Residues 195–198 (KDEL) carry the Prevents secretion from ER motif.

As to quaternary structure, homodimer. May interact with the GPI-anchored plasma membrane protein SKU5 and its family members. Interacts with TMK1 (via extracellular domain). Glycosylated. Post-translationally, ubiquitinated by RMA2, leading to proteasomal degradation.

It is found in the endoplasmic reticulum lumen. It localises to the cell membrane. Functionally, auxin receptor that controls cell elongation and cell division. Involved in embryonic morphogenesis. Acts on the cell cycle, endocycle, cell plate formation, and cell expansion and contributes to the control of auxin-related gene expression. Controls root meristem size and mediates auxin responsiveness. Involved in activation of ROP GTPases in response to auxin and regulation of clathrin-mediated endocytosis in roots. Acts as a positive factor in clathrin recruitment to the plasma membrane, thereby promoting endocytosis. Upon auxin binding, restricts the internalization of PIN proteins by inhibiting clathrin-mediated endocytosis. Promotes auxin-triggered phosphorylation status modulation of RAF-like kinases (e.g. RAF20 and RAF24). Involved in the regulation of polar auxin transport. Behaves as a negative regulator of the SCF(TIR1/AFB) signaling pathway, protecting AUX/IAA repressors from degradation. Regulates the expression of cell wall remodeling genes via an SCF(TIR1/AFB)-dependent pathway. Involved in the modulation of hemicellulose xyloglucan structure. Required for rapid auxin-mediated re-orientation of microtubules to regulate cell elongation in roots and dark-grown hypocotyls as well as asymmetric growth during gravitropic responses. Involved in the shade avoidance response. Forms with TMK1 a cell surface auxin perception complex that activates ROP signaling pathways. ABP1 sensing of auxin is important for the ABP1-TMK1 complex formation. Interacts functionally with phytochrome to regulate growth. This is Auxin-binding protein 1 from Arabidopsis thaliana (Mouse-ear cress).